Consider the following 613-residue polypeptide: DBH-like monooxygenase protein 1 (613 aa).

An N-terminal signal peptide occupies residues 1–19 (MCCWPLLLLWGLLPGTAAG). The Lumenal portion of the chain corresponds to 20–592 (GSGRTYPHRT…TSSSSSLHRD (573 aa)). The DOMON domain maps to 35–148 (GKYWLGWSQR…STVRVIWAYH (114 aa)). A glycan (N-linked (GlcNAc...) asparagine) is linked at Asn-114. Residue Tyr-203 is part of the active site. Disulfide bonds link Cys-205-Cys-257 and Cys-242-Cys-269. 2 residues coordinate Cu cation: His-235 and His-236. An N-linked (GlcNAc...) asparagine glycan is attached at Asn-247. 4 residues coordinate Cu cation: His-307, His-389, His-391, and Met-464. 3 disulfide bridges follow: Cys-364/Cys-480, Cys-368/Cys-550, and Cys-443/Cys-465. Residue His-389 is part of the active site. 2 N-linked (GlcNAc...) asparagine glycosylation sites follow: Asn-476 and Asn-517. The helical transmembrane segment at 593–613 (FSINLLVCLLLLSCTLSTKSL) threads the bilayer.

The protein belongs to the copper type II ascorbate-dependent monooxygenase family. It depends on Cu(2+) as a cofactor. Post-translationally, N-glycosylated. As to expression, highly expressed in lung, kidney, brain and spinal cord.

Its subcellular location is the endoplasmic reticulum membrane. In Homo sapiens (Human), this protein is DBH-like monooxygenase protein 1 (MOXD1).